Here is a 144-residue protein sequence, read N- to C-terminus: Nucleoside diphosphate kinase (144 aa).

Positions 11, 59, 87, 93, 104, and 114 each coordinate ATP. Residue H117 is the Pros-phosphohistidine intermediate of the active site.

It belongs to the NDK family. As to quaternary structure, homotetramer. It depends on Mg(2+) as a cofactor.

It is found in the cytoplasm. It carries out the reaction a 2'-deoxyribonucleoside 5'-diphosphate + ATP = a 2'-deoxyribonucleoside 5'-triphosphate + ADP. The catalysed reaction is a ribonucleoside 5'-diphosphate + ATP = a ribonucleoside 5'-triphosphate + ADP. Major role in the synthesis of nucleoside triphosphates other than ATP. The ATP gamma phosphate is transferred to the NDP beta phosphate via a ping-pong mechanism, using a phosphorylated active-site intermediate. The protein is Nucleoside diphosphate kinase of Aliivibrio fischeri (strain MJ11) (Vibrio fischeri).